Reading from the N-terminus, the 555-residue chain is Probable Xaa-Pro aminopeptidase BC1G_13431 (555 aa).

Mn(2+) contacts are provided by Asp303, Asp314, Glu458, and Glu499. The tract at residues 527 to 555 is disordered; the sequence is EGKEQEEEEEREANRKATESRKQKKTWFW. Basic and acidic residues predominate over residues 538–547; the sequence is EANRKATESR.

The protein belongs to the peptidase M24B family. It depends on Mn(2+) as a cofactor.

It catalyses the reaction Release of any N-terminal amino acid, including proline, that is linked to proline, even from a dipeptide or tripeptide.. Its function is as follows. Catalyzes the removal of a penultimate prolyl residue from the N-termini of peptides. The chain is Probable Xaa-Pro aminopeptidase BC1G_13431 from Botryotinia fuckeliana (strain B05.10) (Noble rot fungus).